A 505-amino-acid chain; its full sequence is 2-isopropylmalate synthase (505 aa).

A Pyruvate carboxyltransferase domain is found at 5-267 (VYIFDTTLRD…YTNIKTEEIY (263 aa)). 4 residues coordinate Mn(2+): D14, H202, H204, and N238. A regulatory domain region spans residues 391-505 (TLEYLHISSG…VNKLIWDSQK (115 aa)).

It belongs to the alpha-IPM synthase/homocitrate synthase family. LeuA type 1 subfamily. Homodimer. The cofactor is Mn(2+).

The protein resides in the cytoplasm. The enzyme catalyses 3-methyl-2-oxobutanoate + acetyl-CoA + H2O = (2S)-2-isopropylmalate + CoA + H(+). Its pathway is amino-acid biosynthesis; L-leucine biosynthesis; L-leucine from 3-methyl-2-oxobutanoate: step 1/4. In terms of biological role, catalyzes the condensation of the acetyl group of acetyl-CoA with 3-methyl-2-oxobutanoate (2-ketoisovalerate) to form 3-carboxy-3-hydroxy-4-methylpentanoate (2-isopropylmalate). This is 2-isopropylmalate synthase from Pelotomaculum thermopropionicum (strain DSM 13744 / JCM 10971 / SI).